The primary structure comprises 131 residues: Translation initiation factor 5A (131 aa).

Position 37 is a hypusine (K37).

It belongs to the eIF-5A family.

Its subcellular location is the cytoplasm. In terms of biological role, functions by promoting the formation of the first peptide bond. The polypeptide is Translation initiation factor 5A (eIF5A) (Methanococcus maripaludis (strain C6 / ATCC BAA-1332)).